The chain runs to 623 residues: uncharacterized protein (623 aa).

Residues Leu-157 to Gln-166 are compositionally biased toward basic and acidic residues. The tract at residues Leu-157–Ile-237 is disordered. The span at Glu-167–Leu-177 shows a compositional bias: polar residues. Over residues Ala-193–Ala-210 the composition is skewed to low complexity.

This is an uncharacterized protein from Macaca fascicularis (Crab-eating macaque).